A 206-amino-acid polypeptide reads, in one-letter code: Ribonuclease HII (206 aa).

Residues Ala19–Glu206 enclose the RNase H type-2 domain. A divalent metal cation is bound by residues Asp25, Glu26, and Asp117.

This sequence belongs to the RNase HII family. Mn(2+) is required as a cofactor. It depends on Mg(2+) as a cofactor.

Its subcellular location is the cytoplasm. It carries out the reaction Endonucleolytic cleavage to 5'-phosphomonoester.. Endonuclease that specifically degrades the RNA of RNA-DNA hybrids. This chain is Ribonuclease HII, found in Vibrio cholerae serotype O1 (strain M66-2).